Here is a 579-residue protein sequence, read N- to C-terminus: Insulin-like growth factor 2 mRNA-binding protein 3 (579 aa).

RRM domains lie at 2 to 75 and 81 to 156; these read NKLY…HSVP and RKLQ…YIPD. The disordered stretch occupies residues 158–192; that stretch reads TAAQQNPSPQLRGRRGPGQRGSSRQASPGSVSKQK. S165 is modified (phosphoserine). S184 carries the phosphoserine; by MTOR modification. KH domains are found at residues 195-260, 276-343, and 405-470; these read DLPL…CKSI, EIPL…EEEI, and TETV…QGRI. Residues K450 and K475 each participate in a glycyl lysine isopeptide (Lys-Gly) (interchain with G-Cter in SUMO2) cross-link. One can recognise a KH 4 domain in the interval 487 to 553; it reads KLEAHIRVPS…YACQVAQRKI (67 aa). At T528 the chain carries Phosphothreonine.

Belongs to the RRM IMP/VICKZ family. In terms of assembly, can form homooligomers and heterooligomers with IGF2BP1 and IGF2BP3 in an RNA-dependent manner. Interacts with IGF2BP1. Interacts with ELAVL1, DHX9, HNRNPU, MATR3 and PABPC1. In terms of tissue distribution, expressed in oocytes, spermatogonia and spermatocytes (at protein level).

Its subcellular location is the nucleus. The protein resides in the cytoplasm. It is found in the P-body. The protein localises to the stress granule. Functionally, RNA-binding factor that may recruit target transcripts to cytoplasmic protein-RNA complexes (mRNPs). This transcript 'caging' into mRNPs allows mRNA transport and transient storage. It also modulates the rate and location at which target transcripts encounter the translational apparatus and shields them from endonuclease attacks or microRNA-mediated degradation. Preferentially binds to N6-methyladenosine (m6A)-containing mRNAs and increases their stability. Binds to the 3'-UTR of CD44 mRNA and stabilizes it, hence promotes cell adhesion and invadopodia formation. Binds to beta-actin/ACTB and MYC transcripts. Increases MYC mRNA stability by binding to the coding region instability determinant (CRD) and binding is enhanced by m6A-modification of the CRD. Binds to the 5'-UTR of the insulin-like growth factor 2 (IGF2) mRNAs. The protein is Insulin-like growth factor 2 mRNA-binding protein 3 (Igf2bp3) of Mus musculus (Mouse).